Here is a 244-residue protein sequence, read N- to C-terminus: MEDLNFEERGSTQIPASLQQHFSAKLGRQNELEKTPSRGGLGLVVNSSKTPGGKSLQSLASACKVPPSTKKNTIPIAFECYEDETDDQIADVATIKKTEKHPCSPIDTANRCETFDSLAADIEDDMLNLEDQDVVLSEDRPYGDVIDPAESEAEALAELGVEEWDSYPPIDPASRIGDDFNYVLRTEDFAEEGDVKLEETRHRTVIADIDEVKMSKAERNELFSMLADDLDSYDLLAEEANLPL.

The interval 31 to 53 (ELEKTPSRGGLGLVVNSSKTPGG) is disordered.

As to quaternary structure, forms a complex (via C-terminus) with separase sep-1. Interaction with ify-1 stabilizes sep-1. Also maintains the complex in the cytoplasm during interphase and recruits it to chromosomes during the first meiotic division. Interacts with E3 ubiquitin-protein ligase etc-1. Ubiquitinated by etc-1 likely at the onset of anaphase, resulting in its degradation. In terms of tissue distribution, expressed in germ cells including oocytes.

Its subcellular location is the cytoplasm. It localises to the chromosome. It is found in the cytoskeleton. The protein localises to the spindle. Functionally, acts as a chaperone and as an inhibitor for separase sep-1. Plays an essential role in maintaining chromosome cohesion prior to meiotic and mitotic anaphase, in cytokinesis and in organizing the spindle and the centrosome. Ubiquitination-dependent degradation at the onset of anaphase is likely to activate sep-1 resulting in the proteolysis of the cohesin complex and the subsequent segregation of the chromosomes. Also required for cortical granule exocytosis. The protein is Securin-like protein of Caenorhabditis elegans.